A 103-amino-acid polypeptide reads, in one-letter code: Large ribosomal subunit protein bL21 (103 aa).

Belongs to the bacterial ribosomal protein bL21 family. Part of the 50S ribosomal subunit. Contacts protein L20.

Its function is as follows. This protein binds to 23S rRNA in the presence of protein L20. The polypeptide is Large ribosomal subunit protein bL21 (Haemophilus influenzae (strain 86-028NP)).